A 2606-amino-acid chain; its full sequence is Large tegument protein deneddylase (2606 aa).

The tract at residues 1–235 is deubiquitination activity; that stretch reads MAFQAQTDTG…LKRSGAYVNL (235 aa). Positions 14–225 constitute a Peptidase C76 domain; it reads LATASSHQGD…LLANYGIASA (212 aa). Active-site residues include Cys34, Asp163, and His165. Disordered regions lie at residues 318–349, 390–411, 1020–1135, 2253–2316, and 2434–2458; these read IAIS…PNEA, DTDS…KSGQ, KKGL…ESSE, PEIH…PTPL, and PPHD…ERKY. The span at 1038 to 1050 shows a compositional bias: polar residues; it reads TPVTDSKLIQDSQ. Basic and acidic residues predominate over residues 1051–1061; the sequence is QNDRHQKEKPL. Positions 1085–1097 are enriched in polar residues; that stretch reads KPQNLSLPVSTNK. The segment covering 1105 to 1132 has biased composition (low complexity); it reads ESSPIESTSPSHSPVSSMESQNGSFSLE. A compositionally biased stretch (pro residues) spans 2304 to 2316; it reads PNPPRPTTFPTPL.

The protein belongs to the herpesviridae large tegument protein family. As to quaternary structure, interacts with host CUL1 and CUL4A; these interactions inhibit the E3 ligase activity of cullins. Interacts with inner tegument protein. Interacts with capsid vertex specific component CVC2. Interacts with the major capsid protein/MCP.

The protein resides in the virion tegument. It localises to the host cytoplasm. Its subcellular location is the host nucleus. It catalyses the reaction Thiol-dependent hydrolysis of ester, thioester, amide, peptide and isopeptide bonds formed by the C-terminal Gly of ubiquitin (a 76-residue protein attached to proteins as an intracellular targeting signal).. Its function is as follows. Large tegument protein that plays multiple roles in the viral cycle. During viral entry, remains associated with the capsid while most of the tegument is detached and participates in the capsid transport toward the host nucleus. Plays a role in the routing of the capsid at the nuclear pore complex and subsequent uncoating. Within the host nucleus, acts as a deneddylase and promotes the degradation of nuclear CRLs (cullin-RING ubiquitin ligases) and thereby stabilizes nuclear CRL substrates, while cytoplasmic CRLs remain unaffected. These modifications prevent host cell cycle S-phase progression and create a favorable environment allowing efficient viral genome replication. Participates later in the secondary envelopment of capsids. Indeed, plays a linker role for the association of the outer viral tegument to the capsids together with the inner tegument protein. The polypeptide is Large tegument protein deneddylase (64) (Connochaetes taurinus (Blue wildebeest)).